Consider the following 49-residue polypeptide: Protein OPG059 (49 aa).

Methionine 1 is a topological domain (virion surface). Residues 2–22 (VIGLVIFVSVAATIVGVLSNV) form a helical membrane-spanning segment. The Intravirion portion of the chain corresponds to 23–49 (LDMIMYVEENNEEDAKIKEEQELLLLY).

It belongs to the orthopoxvirus OPG059 family.

It localises to the virion membrane. The protein localises to the host membrane. Functionally, may play a role in cell adhesion and is important for virus virulence in vivo, although it is not required for the virus life cycle in cell cultures. This chain is Protein OPG059 (OPG059), found in Cynomys gunnisoni (Gunnison's prairie dog).